A 2629-amino-acid chain; its full sequence is Telomerase protein component 1 (2629 aa).

TEP1 N-terminal repeat units follow at residues 1-30 (MEKL…DLQP), 31-60 (LEKI…DLQP), 61-90 (TERI…DLQP), and 91-120 (LEKL…TVKS). The TROVE domain maps to 227–685 (LKLTSGDSGF…VKHNLSPMPG (459 aa)). Positions 386–397 (PRKHRSKRRSRQ) are enriched in basic residues. The tract at residues 386–412 (PRKHRSKRRSRQPPRPQKTERPFSERG) is disordered. Residues 402 to 412 (QKTERPFSERG) are compositionally biased toward basic and acidic residues. One can recognise an NACHT domain in the interval 1171-1578 (RLSLVTGQAG…EFLTNLHVVA (408 aa)). An ATP-binding site is contributed by 1177–1184 (GQAGQGKT). WD repeat units follow at residues 1420–1462 (VLPQ…EVLA), 1681–1720 (TMSS…EEKA), 1723–1761 (SGCD…WVFQ), 1764–1803 (AHQY…LAFQ), 1805–1844 (THPK…VTKE), 1847–1886 (APGP…RLAA), 1889–1930 (AQCG…GCLG), 1932–1971 (LPLS…QGPQ), 1974–2013 (ELNV…HSLW), 2015–2054 (LSRY…QPHV), 2067–2106 (GHEG…APLL), 2113–2151 (CHRD…QLGQ), 2154–2191 (GHQS…LTSI), 2193–2241 (AHSG…QIRT), 2244–2282 (GHSG…DDSY), 2285–2324 (RSSV…ATAQ), 2326–2362 (PGRV…GSTS), 2375–2424 (EDWG…SSIL), 2467–2507 (PNGS…GEWI), 2555–2592 (IHLG…LLGL), and 2594–2628 (RCEG…FLSW).

In terms of assembly, associated component of the telomerase holoenzyme complex. Component of the vault ribonucleoprotein particle, at least composed of MVP, PARP4 and one or more vault RNAs (vRNAs). Binds to VAULTRC1, VAULTRC2 and VAULTRC4/hvg4 vRNAs. As to expression, ubiquitous.

Its subcellular location is the nucleus. It is found in the chromosome. It localises to the telomere. In terms of biological role, component of the telomerase ribonucleoprotein complex that is essential for the replication of chromosome termini. Also a component of the ribonucleoprotein vaults particle, a multi-subunit structure involved in nucleo-cytoplasmic transport. Responsible for the localizing and stabilizing vault RNA (vRNA) association in the vault ribonucleoprotein particle. The protein is Telomerase protein component 1 (Tep1) of Mus musculus (Mouse).